The primary structure comprises 255 residues: 4-hydroxy-tetrahydrodipicolinate reductase (255 aa).

NAD(+)-binding positions include 9–14 (GFKGKM), Asp-35, 89–91 (GTT), and 115–118 (APNF). The active-site Proton donor/acceptor is the His-145. His-146 lines the (S)-2,3,4,5-tetrahydrodipicolinate pocket. Lys-149 (proton donor) is an active-site residue. 155-156 (GT) is a (S)-2,3,4,5-tetrahydrodipicolinate binding site.

This sequence belongs to the DapB family.

Its subcellular location is the cytoplasm. It catalyses the reaction (S)-2,3,4,5-tetrahydrodipicolinate + NAD(+) + H2O = (2S,4S)-4-hydroxy-2,3,4,5-tetrahydrodipicolinate + NADH + H(+). It carries out the reaction (S)-2,3,4,5-tetrahydrodipicolinate + NADP(+) + H2O = (2S,4S)-4-hydroxy-2,3,4,5-tetrahydrodipicolinate + NADPH + H(+). Its pathway is amino-acid biosynthesis; L-lysine biosynthesis via DAP pathway; (S)-tetrahydrodipicolinate from L-aspartate: step 4/4. In terms of biological role, catalyzes the conversion of 4-hydroxy-tetrahydrodipicolinate (HTPA) to tetrahydrodipicolinate. This is 4-hydroxy-tetrahydrodipicolinate reductase from Streptococcus pneumoniae (strain P1031).